Consider the following 847-residue polypeptide: Beta-hexosaminidase (847 aa).

3 disulfide bridges follow: C31–C40, C377–C385, and C484–C530. E519 serves as the catalytic Proton donor.

It belongs to the glycosyl hydrolase 20 family.

The catalysed reaction is Hydrolysis of terminal non-reducing N-acetyl-D-hexosamine residues in N-acetyl-beta-D-hexosaminides.. It participates in glycan degradation; chitin degradation. In terms of biological role, hydrolysis of terminal, non-reducing N-acetyl-beta-D-glucosamine residues in chitobiose and higher analogs, and in glycoproteins. This is Beta-hexosaminidase (hex) from Vibrio vulnificus.